Consider the following 449-residue polypeptide: Tubulin beta chain (449 aa).

Residues Gln-11, Glu-69, Ser-138, Gly-142, Thr-143, Gly-144, Asn-204, and Asn-226 each contribute to the GTP site. Glu-69 contacts Mg(2+).

It belongs to the tubulin family. Dimer of alpha and beta chains. A typical microtubule is a hollow water-filled tube with an outer diameter of 25 nm and an inner diameter of 15 nM. Alpha-beta heterodimers associate head-to-tail to form protofilaments running lengthwise along the microtubule wall with the beta-tubulin subunit facing the microtubule plus end conferring a structural polarity. Microtubules usually have 13 protofilaments but different protofilament numbers can be found in some organisms and specialized cells. Mg(2+) is required as a cofactor.

The protein resides in the cytoplasm. It localises to the cytoskeleton. Tubulin is the major constituent of microtubules, a cylinder consisting of laterally associated linear protofilaments composed of alpha- and beta-tubulin heterodimers. Microtubules grow by the addition of GTP-tubulin dimers to the microtubule end, where a stabilizing cap forms. Below the cap, tubulin dimers are in GDP-bound state, owing to GTPase activity of alpha-tubulin. In Candida albicans (Yeast), this protein is Tubulin beta chain (TUB2).